A 349-amino-acid chain; its full sequence is MAAEEEEVDSADTGERSGWLTGWLPTWCPTSISHLKEAEEKMLKCVPCTYKKEPVRISNGNKIWTLKFSHNISNKTPLVLLHGFGGGLGLWALNFGDLCTNRPVYAFDLLGFGRSSRPRFDSDAEEVENQFVESIEEWRCALGLDKMILLGHNLGGFLAAAYSLKYPSRVNHLILVEPWGFPERPDLADQDRPIPVWIRALGAALTPFNPLAGLRIAGPFGLSLVQRLRPDFKRKYSSMFEDDTVTEYIYHCNVQTPSGETAFKNMTIPYGWAKRPMLQRIGKMHPDIPVSVIFGARSCIDGNSGTSIQSLRPHSYVKTIAILGAGHYVYADQPEEFNQKVKEICDTVD.

N-acetylalanine is present on A2. Positions 77 to 184 (PLVLLHGFGG…LVEPWGFPER (108 aa)) constitute an AB hydrolase-1 domain. S122 carries the phosphoserine modification. The HXXXXD motif signature appears at 327–332 (HYVYAD).

The protein belongs to the peptidase S33 family. ABHD4/ABHD5 subfamily. As to quaternary structure, interacts with ADRP, PLIN and PNPLA2. Interacts with PLIN5; promotes interaction with PNPLA2. In terms of tissue distribution, widely expressed in various tissues, including lymphocytes, liver, skeletal muscle and brain. Expressed by upper epidermal layers and dermal fibroblasts in skin, hepatocytes and neurons (at protein level).

The protein localises to the cytoplasm. It is found in the lipid droplet. The protein resides in the cytosol. It carries out the reaction a 1-acyl-sn-glycero-3-phosphate + an acyl-CoA = a 1,2-diacyl-sn-glycero-3-phosphate + CoA. The catalysed reaction is 1-(9Z-octadecenoyl)-sn-glycero-3-phosphate + hexadecanoyl-CoA = 1-(9Z)-octadecenoyl-2-hexadecanoyl-sn-glycero-3-phosphate + CoA. The enzyme catalyses 1-(9Z-octadecenoyl)-sn-glycero-3-phosphate + octadecanoyl-CoA = 1-(9Z-octadecenoyl)-2-octadecanoyl-sn-glycero-3-phosphate + CoA. It catalyses the reaction 1-(9Z-octadecenoyl)-sn-glycero-3-phosphate + (9Z)-octadecenoyl-CoA = 1,2-di-(9Z-octadecenoyl)-sn-glycero-3-phosphate + CoA. It carries out the reaction 1-(9Z-octadecenoyl)-sn-glycero-3-phosphate + (5Z,8Z,11Z,14Z)-eicosatetraenoyl-CoA = 1-(9Z)-octadecenoyl-2-(5Z,8Z,11Z,14Z)-eicosatetraenoyl-sn-glycero-3-phosphate + CoA. The catalysed reaction is eicosanoyl-CoA + 1-(9Z-octadecenoyl)-sn-glycero-3-phosphate = 1-(9Z)-octadecenoyl-2-eicosanoyl-sn-glycero-3-phosphate + CoA. The enzyme catalyses 1-hexadecanoyl-sn-glycero-3-phosphate + (9Z)-octadecenoyl-CoA = 1-hexadecanoyl-2-(9Z-octadecenoyl)-sn-glycero-3-phosphate + CoA. It catalyses the reaction 1-octadecanoyl-sn-glycero-3-phosphate + (9Z)-octadecenoyl-CoA = 1-octadecanoyl-2-(9Z-octadecenoyl)-sn-glycero-3-phosphate + CoA. It carries out the reaction 1-(5Z,8Z,11Z,14Z-eicosatetraenoyl)-sn-glycero-3-phosphate + (9Z)-octadecenoyl-CoA = 1-(5Z,8Z,11Z,14Z)-eicosatetraenoyl-2-(9Z)-octadecenoyl-sn-glycero-3-phosphate + CoA. Acyltransferase activity is inhibited by detergents such as Triton X-100 and 3-[(3-cholamidopropyl)dimethylammonio]-1-propanesulfonate (CHAPS). Acyltransferase activity is inhibited by the presence of magnesium and calcium. Functionally, coenzyme A-dependent lysophosphatidic acid acyltransferase that catalyzes the transfer of an acyl group on a lysophosphatidic acid. Functions preferentially with 1-oleoyl-lysophosphatidic acid followed by 1-palmitoyl-lysophosphatidic acid, 1-stearoyl-lysophosphatidic acid and 1-arachidonoyl-lysophosphatidic acid as lipid acceptor. Functions preferentially with arachidonoyl-CoA followed by oleoyl-CoA as acyl group donors. Functions in phosphatidic acid biosynthesis. May regulate the cellular storage of triacylglycerol through activation of the phospholipase PNPLA2. Involved in keratinocyte differentiation. Regulates lipid droplet fusion. The protein is 1-acylglycerol-3-phosphate O-acyltransferase ABHD5 of Homo sapiens (Human).